The following is a 446-amino-acid chain: Bifunctional protein GlmU (446 aa).

The tract at residues 1-225 is pyrophosphorylase; sequence MEGIILAAGK…ETEVYGVNDR (225 aa). UDP-N-acetyl-alpha-D-glucosamine is bound by residues 6–9, Lys20, Gln70, and 75–76; these read LAAG and GT. Asp98 is a Mg(2+) binding site. The UDP-N-acetyl-alpha-D-glucosamine site is built by Gly135, Glu150, Asn165, and Asn223. Residue Asn223 coordinates Mg(2+). Positions 226–246 are linker; that stretch reads VQLARLTKGVYRRKAEALMQE. The tract at residues 247–446 is N-acetyltransferase; the sequence is GVTIIDPETV…RQVNKEDYVK (200 aa). Residues Arg328 and Lys346 each coordinate UDP-N-acetyl-alpha-D-glucosamine. His358 acts as the Proton acceptor in catalysis. UDP-N-acetyl-alpha-D-glucosamine contacts are provided by Tyr361 and Asn372. Residues Ala375, 381–382, Ser400, Ala418, and Arg435 each bind acetyl-CoA; that span reads NY.

It in the N-terminal section; belongs to the N-acetylglucosamine-1-phosphate uridyltransferase family. The protein in the C-terminal section; belongs to the transferase hexapeptide repeat family. As to quaternary structure, homotrimer. The cofactor is Mg(2+).

It localises to the cytoplasm. The enzyme catalyses alpha-D-glucosamine 1-phosphate + acetyl-CoA = N-acetyl-alpha-D-glucosamine 1-phosphate + CoA + H(+). It catalyses the reaction N-acetyl-alpha-D-glucosamine 1-phosphate + UTP + H(+) = UDP-N-acetyl-alpha-D-glucosamine + diphosphate. Its pathway is nucleotide-sugar biosynthesis; UDP-N-acetyl-alpha-D-glucosamine biosynthesis; N-acetyl-alpha-D-glucosamine 1-phosphate from alpha-D-glucosamine 6-phosphate (route II): step 2/2. It functions in the pathway nucleotide-sugar biosynthesis; UDP-N-acetyl-alpha-D-glucosamine biosynthesis; UDP-N-acetyl-alpha-D-glucosamine from N-acetyl-alpha-D-glucosamine 1-phosphate: step 1/1. It participates in bacterial outer membrane biogenesis; LPS lipid A biosynthesis. Its function is as follows. Catalyzes the last two sequential reactions in the de novo biosynthetic pathway for UDP-N-acetylglucosamine (UDP-GlcNAc). The C-terminal domain catalyzes the transfer of acetyl group from acetyl coenzyme A to glucosamine-1-phosphate (GlcN-1-P) to produce N-acetylglucosamine-1-phosphate (GlcNAc-1-P), which is converted into UDP-GlcNAc by the transfer of uridine 5-monophosphate (from uridine 5-triphosphate), a reaction catalyzed by the N-terminal domain. The protein is Bifunctional protein GlmU of Carboxydothermus hydrogenoformans (strain ATCC BAA-161 / DSM 6008 / Z-2901).